Reading from the N-terminus, the 454-residue chain is Noelin-2 (454 aa).

A signal peptide spans 1-20 (MWPLTVPPPLLLLLCSGLAG). 2 coiled-coil regions span residues 58 to 85 (RDGR…LELR) and 136 to 193 (LEQY…AQKL). 6 N-linked (GlcNAc...) asparagine glycosylation sites follow: Asn-74, Asn-155, Asn-275, Asn-310, Asn-399, and Asn-441. An Olfactomedin-like domain is found at 194-446 (GCGKLTGVSN…QVLYNVTLFH (253 aa)). Cysteines 195 and 377 form a disulfide.

In terms of assembly, peripherally associated with AMPAR complex. AMPAR complex consists of an inner core made of 4 pore-forming GluA/GRIA proteins (GRIA1, GRIA2, GRIA3 and GRIA4) and 4 major auxiliary subunits arranged in a twofold symmetry. One of the two pairs of distinct binding sites is occupied either by CNIH2, CNIH3 or CACNG2, CACNG3. The other harbors CACNG2, CACNG3, CACNG4, CACNG8 or GSG1L. This inner core of AMPAR complex is complemented by outer core constituents binding directly to the GluA/GRIA proteins at sites distinct from the interaction sites of the inner core constituents. Outer core constituents include at least PRRT1, PRRT2, CKAMP44/SHISA9, FRRS1L and NRN1. The proteins of the inner and outer core serve as a platform for other, more peripherally associated AMPAR constituents, including OLFM2. Alone or in combination, these auxiliary subunits control the gating and pharmacology of the AMPAR complex and profoundly impact their biogenesis and protein processing. Interacts with GRIA2. Interacts with OLFM1 and OLFM3. Interacts with SRF; the interaction promotes dissociation of SRF from the transcriptional repressor HEY2. Interacts with RUNX2. In terms of processing, N-glycosylated. As to expression, expressed in aortic smooth muscle (at protein level). In the fetus, expressed in the brain and ocular tissues including lens vesicle and optic cup.

The protein localises to the secreted. It is found in the synapse. Its subcellular location is the membrane. It localises to the nucleus. The protein resides in the cytoplasm. Functionally, involved in transforming growth factor beta (TGF-beta)-induced smooth muscle differentiation. TGF-beta induces expression and translocation of OLFM2 to the nucleus where it binds to SRF, causing its dissociation from the transcriptional repressor HEY2/HERP1 and facilitating binding of SRF to target genes. Plays a role in AMPAR complex organization. Is a regulator of vascular smooth-muscle cell (SMC) phenotypic switching, that acts by promoting RUNX2 and inhibiting MYOCD binding to SRF. SMC phenotypic switching is the process through which vascular SMCs undergo transition between a quiescent contractile phenotype and a proliferative synthetic phenotype in response to pathological stimuli. SMC phenotypic plasticity is essential for vascular development and remodeling. The chain is Noelin-2 (OLFM2) from Homo sapiens (Human).